A 137-amino-acid polypeptide reads, in one-letter code: Putative nucleoside diphosphate kinase (137 aa).

Positions 45, 73, 79, 90, and 100 each coordinate ATP. H103 functions as the Pros-phosphohistidine intermediate in the catalytic mechanism.

The protein belongs to the NDK family. Mg(2+) serves as cofactor.

The enzyme catalyses a 2'-deoxyribonucleoside 5'-diphosphate + ATP = a 2'-deoxyribonucleoside 5'-triphosphate + ADP. It catalyses the reaction a ribonucleoside 5'-diphosphate + ATP = a ribonucleoside 5'-triphosphate + ADP. Major role in the synthesis of nucleoside triphosphates other than ATP. The ATP gamma phosphate is transferred to the NDP beta phosphate via a ping-pong mechanism, using a phosphorylated active-site intermediate. In Homo sapiens (Human), this protein is Putative nucleoside diphosphate kinase (NME2P1).